A 177-amino-acid polypeptide reads, in one-letter code: Large ribosomal subunit protein uL6 (177 aa).

The span at 152-171 shows a compositional bias: basic and acidic residues; the sequence is RPPEPYKGKGVRYDDEEVRR. The tract at residues 152-177 is disordered; the sequence is RPPEPYKGKGVRYDDEEVRRKEAKKK.

This sequence belongs to the universal ribosomal protein uL6 family. Part of the 50S ribosomal subunit.

Its function is as follows. This protein binds to the 23S rRNA, and is important in its secondary structure. It is located near the subunit interface in the base of the L7/L12 stalk, and near the tRNA binding site of the peptidyltransferase center. The polypeptide is Large ribosomal subunit protein uL6 (Shewanella oneidensis (strain ATCC 700550 / JCM 31522 / CIP 106686 / LMG 19005 / NCIMB 14063 / MR-1)).